The sequence spans 419 residues: Histidine--tRNA ligase (419 aa).

The protein belongs to the class-II aminoacyl-tRNA synthetase family. Homodimer.

It localises to the cytoplasm. The enzyme catalyses tRNA(His) + L-histidine + ATP = L-histidyl-tRNA(His) + AMP + diphosphate + H(+). This is Histidine--tRNA ligase from Desulfatibacillum aliphaticivorans.